A 316-amino-acid polypeptide reads, in one-letter code: Lipoyl synthase (316 aa).

The span at 1–19 shows a compositional bias: basic and acidic residues; sequence MRDLKIPEQRHPEKAHRPD. The tract at residues 1–31 is disordered; it reads MRDLKIPEQRHPEKAHRPDNAQPKKPSWIRV. Residues Cys-55, Cys-60, Cys-66, Cys-81, Cys-85, Cys-88, and Ser-295 each coordinate [4Fe-4S] cluster. Residues 67-284 form the Radical SAM core domain; it reads WSQGHATMMI…EKAAYGKGFL (218 aa).

Belongs to the radical SAM superfamily. Lipoyl synthase family. Requires [4Fe-4S] cluster as cofactor.

It localises to the cytoplasm. The enzyme catalyses [[Fe-S] cluster scaffold protein carrying a second [4Fe-4S](2+) cluster] + N(6)-octanoyl-L-lysyl-[protein] + 2 oxidized [2Fe-2S]-[ferredoxin] + 2 S-adenosyl-L-methionine + 4 H(+) = [[Fe-S] cluster scaffold protein] + N(6)-[(R)-dihydrolipoyl]-L-lysyl-[protein] + 4 Fe(3+) + 2 hydrogen sulfide + 2 5'-deoxyadenosine + 2 L-methionine + 2 reduced [2Fe-2S]-[ferredoxin]. The protein operates within protein modification; protein lipoylation via endogenous pathway; protein N(6)-(lipoyl)lysine from octanoyl-[acyl-carrier-protein]: step 2/2. Functionally, catalyzes the radical-mediated insertion of two sulfur atoms into the C-6 and C-8 positions of the octanoyl moiety bound to the lipoyl domains of lipoate-dependent enzymes, thereby converting the octanoylated domains into lipoylated derivatives. The polypeptide is Lipoyl synthase (Ruegeria sp. (strain TM1040) (Silicibacter sp.)).